The chain runs to 638 residues: Threonine--tRNA ligase (638 aa).

The region spanning 1 to 61 (MPDIKLPDGS…EQNADLAIIT (61 aa)) is the TGS domain. Positions 242–533 (DHRRLGKQYD…LIENFAGALP (292 aa)) are catalytic. Cys333, His384, and His510 together coordinate Zn(2+).

Belongs to the class-II aminoacyl-tRNA synthetase family. Homodimer. Requires Zn(2+) as cofactor.

The protein localises to the cytoplasm. The enzyme catalyses tRNA(Thr) + L-threonine + ATP = L-threonyl-tRNA(Thr) + AMP + diphosphate + H(+). Catalyzes the attachment of threonine to tRNA(Thr) in a two-step reaction: L-threonine is first activated by ATP to form Thr-AMP and then transferred to the acceptor end of tRNA(Thr). Also edits incorrectly charged L-seryl-tRNA(Thr). The chain is Threonine--tRNA ligase from Dechloromonas aromatica (strain RCB).